Consider the following 98-residue polypeptide: QEAPKAFNQCQACHKVEAGEDGVGPSLFGLFGHKLGQAPGFKYSEAHLKFAQQTVDEPFLTKYLADPKASLPGNKMVFAGLKNPDDVKAVLAYLKTIK.

At Gln-1 the chain carries Pyrrolidone carboxylic acid. 4 residues coordinate heme c: Cys-10, Cys-13, His-14, and Met-76.

This sequence belongs to the cytochrome c family. Binds 1 heme c group covalently per subunit.

Its subcellular location is the periplasm. Functionally, cytochrome c2 is found mainly in purple, non-sulfur, photosynthetic bacteria where it functions as the electron donor to the oxidized bacteriochlorophyll in the photophosphorylation pathway. However, it may also have a role in the respiratory chain and is found in some non-photosynthetic bacteria. The chain is Cytochrome c2 from Rhodoplanes tepidamans (Rhodoplanes cryptolactis).